The chain runs to 545 residues: uncharacterized protein (545 aa).

Disordered regions lie at residues 1-162 (MSSG…DPQE) and 200-250 (YPPV…EPPP). Positions 86–100 (NYRSHSSADYLTPNS) are enriched in polar residues. Composition is skewed to low complexity over residues 109–128 (TTPR…TATK) and 141–152 (SGASTSSGTSST). Polar residues-rich tracts occupy residues 212–221 (SSRTGTLQRT) and 228–244 (ISST…QMQS). The 83-residue stretch at 458-540 (RVLVEKMMPG…VTITLLPAVG (83 aa)) folds into the PDZ domain.

This is an uncharacterized protein from Caenorhabditis elegans.